The sequence spans 559 residues: 2-isopropylmalate synthase (559 aa).

Residues 33 to 307 (PIWCSSDLRD…NPDLDFSDID (275 aa)) enclose the Pyruvate carboxyltransferase domain. Positions 42, 246, 248, and 282 each coordinate Mg(2+). A regulatory domain region spans residues 439-559 (ANTPYALVSH…SLSQPEAKAA (121 aa)).

It belongs to the alpha-IPM synthase/homocitrate synthase family. LeuA type 2 subfamily. Homodimer. Mg(2+) serves as cofactor.

The protein localises to the cytoplasm. It catalyses the reaction 3-methyl-2-oxobutanoate + acetyl-CoA + H2O = (2S)-2-isopropylmalate + CoA + H(+). Its pathway is amino-acid biosynthesis; L-leucine biosynthesis; L-leucine from 3-methyl-2-oxobutanoate: step 1/4. Its function is as follows. Catalyzes the condensation of the acetyl group of acetyl-CoA with 3-methyl-2-oxobutanoate (2-ketoisovalerate) to form 3-carboxy-3-hydroxy-4-methylpentanoate (2-isopropylmalate). The chain is 2-isopropylmalate synthase from Pseudomonas fluorescens (strain Pf0-1).